The chain runs to 312 residues: Zinc finger protein-like 1 (312 aa).

The segment at 1-43 adopts a B box-type; degenerate zinc-finger fold; sequence MGLCKCPKRKVTNLFCFEHRVNVCEHCLVANHAKCIVQSYLQW. At 1–268 the chain is on the cytoplasmic side; sequence MGLCKCPKRK…RPLTLLQRAG (268 aa). The RING-type; degenerate zinc finger occupies 53 to 101; the sequence is CRLCNIPLAARETTRLICYDLFHWACLNERAAQLPRNTAPAGYQCPSCS. The disordered stretch occupies residues 144 to 233; that stretch reads EPEPLNTSEF…RAPGLHRDCD (90 aa). Over residues 148–173 the composition is skewed to polar residues; the sequence is LNTSEFSDWSSFNASGSPEQEETASA. Residues 215–233 are compositionally biased toward basic and acidic residues; that stretch reads KVYDTRDDERAPGLHRDCD. A helical membrane pass occupies residues 269-289; the sequence is LLLLLGLLGFLALLALMSRLG. The Lumenal portion of the chain corresponds to 290 to 312; the sequence is RAAADSDPNLDPLMNPHIRVGPS.

Belongs to the ZFPL1 family. Interacts with GOLGA2/GM130. Post-translationally, phosphorylated.

The protein localises to the golgi apparatus. Its subcellular location is the cis-Golgi network membrane. In terms of biological role, required for cis-Golgi integrity and efficient ER to Golgi transport. Involved in the maintenance of the integrity of the cis-Golgi, possibly via its interaction with GOLGA2/GM130. This is Zinc finger protein-like 1 (ZFPL1) from Bos taurus (Bovine).